The sequence spans 238 residues: Phosphoribosylaminoimidazole-succinocarboxamide synthase (238 aa).

This sequence belongs to the SAICAR synthetase family.

The catalysed reaction is 5-amino-1-(5-phospho-D-ribosyl)imidazole-4-carboxylate + L-aspartate + ATP = (2S)-2-[5-amino-1-(5-phospho-beta-D-ribosyl)imidazole-4-carboxamido]succinate + ADP + phosphate + 2 H(+). It participates in purine metabolism; IMP biosynthesis via de novo pathway; 5-amino-1-(5-phospho-D-ribosyl)imidazole-4-carboxamide from 5-amino-1-(5-phospho-D-ribosyl)imidazole-4-carboxylate: step 1/2. The protein is Phosphoribosylaminoimidazole-succinocarboxamide synthase of Desulfitobacterium hafniense (strain Y51).